Reading from the N-terminus, the 40-residue chain is Dolichyl-diphosphooligosaccharide--protein glycosyltransferase subunit 4 (40 aa).

The Lumenal portion of the chain corresponds to 1–4 (MITD). Residues 5–25 (VQLAIFSNVLGVFLFLLVVAY) form a helical membrane-spanning segment. Residues 26-40 (HYINANTGKSSIKTK) lie on the Cytoplasmic side of the membrane.

Belongs to the OST4 family. As to quaternary structure, component of the oligosaccharyltransferase (OST) complex.

Its subcellular location is the endoplasmic reticulum membrane. Subunit of the oligosaccharyl transferase (OST) complex that catalyzes the initial transfer of a defined glycan (Glc(3)Man(9)GlcNAc(2) in eukaryotes) from the lipid carrier dolichol-pyrophosphate to an asparagine residue within an Asn-X-Ser/Thr consensus motif in nascent polypeptide chains, the first step in protein N-glycosylation. N-glycosylation occurs cotranslationally and the complex associates with the Sec61 complex at the channel-forming translocon complex that mediates protein translocation across the endoplasmic reticulum (ER). All subunits are required for a maximal enzyme activity. The polypeptide is Dolichyl-diphosphooligosaccharide--protein glycosyltransferase subunit 4 (Drosophila virilis (Fruit fly)).